Here is a 630-residue protein sequence, read N- to C-terminus: Probable potassium transport system protein Kup 2 (630 aa).

12 consecutive transmembrane segments (helical) span residues Ala14 to Thr34, Val56 to Lys76, Val108 to Thr128, Pro145 to Phe165, Ala176 to Ile196, Phe214 to Thr234, Trp255 to Leu275, Leu293 to Ile313, Met352 to Ala372, Tyr375 to Trp395, Pro402 to Ala422, and Leu427 to Thr447.

It belongs to the HAK/KUP transporter (TC 2.A.72) family.

It localises to the cell inner membrane. It carries out the reaction K(+)(in) + H(+)(in) = K(+)(out) + H(+)(out). Functionally, transport of potassium into the cell. Likely operates as a K(+):H(+) symporter. The protein is Probable potassium transport system protein Kup 2 of Rhodopseudomonas palustris (strain BisA53).